Consider the following 324-residue polypeptide: Ribose 1,5-bisphosphate isomerase (324 aa).

Residues 22 to 25 and R65 contribute to the substrate site; that span reads RGAG. C135 acts as the Proton acceptor in catalysis. 137-139 serves as a coordination point for substrate; the sequence is SKA. Catalysis depends on D204, which acts as the Proton donor. K240 is a substrate binding site.

It belongs to the eIF-2B alpha/beta/delta subunits family. R15P isomerase subfamily.

The enzyme catalyses alpha-D-ribose 1,5-bisphosphate = D-ribulose 1,5-bisphosphate. Functionally, catalyzes the isomerization of ribose 1,5-bisphosphate (R15P) to ribulose 1,5-bisphosphate (RuBP), the CO(2) acceptor and substrate for RubisCO. Functions in an archaeal AMP degradation pathway, together with AMP phosphorylase and RubisCO. The chain is Ribose 1,5-bisphosphate isomerase from Pyrococcus furiosus (strain ATCC 43587 / DSM 3638 / JCM 8422 / Vc1).